We begin with the raw amino-acid sequence, 777 residues long: MAMVTARQFLASAAELGSGRRRCGGGGACDMREDGGVEALMQCQRVSNLLIAASFLSIPLELFYFATCADLSEVKCAVLHFCAFIVLCGATHLLAAFTHAHPHSAPLLRALTAAKVLAAVASSAAAVSLLTFIPKLLRIKVRESLLRDKASRLHRDLGLVRRREEATSRAVRELTGRIRASPPDAHAILRTTALQLADALGLHACAVWMPAAGRPHDLVLVHHLTSRPDDAADLLLEVGDACTVAADDPDVVDVMASKVAKVLEPDSALAMASSVGAAPAGAVAAIRIPILRVSIYDGGGTPEVTEASYAILVLLLPPHDAAGGWSSHDLEIVQVVADQAAVALSHAAVLEESRSMRDRFAEQHRALMQAKHRAAMATRAFSSIQSAMCHAMRRPVHSIVGLVSMLQHPEADTMRPEQRLAVDAIARTSNLLSALMDEVIVNRQHLSVQRKPFSLHALIKEAISVAGCLSHCGGAGFLHQLECALPEWVVGDERRVFHLLLDMVGTLLNRCNTESGACRLSFSIRICNVGEERYSLDWIPMRPTFSGCNVCVKFKVGIGRSRSCAIERSLPCELPRRSAATTSSQMGHIFSGYFNKIVQMMNGNMWSASDSEGVGESVTLILQFKLQQGHVEASPPYIPHLNGLRVLLADDDAMNRGVTKKILERLGCQVMSAPSGAHCLSLLASAEASFQLVVLDLDDRAVPSAAMDGFEVALRIRELRYSCWLLIVIAVAAGVVATDDGGAVQELCQRAGINGLVQKPVTLPALGAQLCRVLQDN.

Helical transmembrane passes span 49–69, 77–97, and 113–133; these read LLIA…ATCA, AVLH…LAAF, and AAKV…LTFI. Cu cation is bound by residues Cys88 and His92. The GAF domain maps to 184-344; sequence DAHAILRTTA…VVADQAAVAL (161 aa). A Histidine kinase domain is found at 387-521; it reads AMCHAMRRPV…NTESGACRLS (135 aa). Phosphohistidine; by autocatalysis is present on His390. Residues 645–774 enclose the Response regulatory domain; it reads RVLLADDDAM…ALGAQLCRVL (130 aa). Asp696 bears the 4-aspartylphosphate mark.

Belongs to the ethylene receptor family. The cofactor is Cu cation.

The protein localises to the endoplasmic reticulum membrane. It carries out the reaction ATP + protein L-histidine = ADP + protein N-phospho-L-histidine.. Its function is as follows. Ethylene receptor related to bacterial two-component regulators. Acts as a redundant negative regulator of ethylene signaling. This chain is Ethylene receptor 4, found in Oryza sativa subsp. indica (Rice).